A 329-amino-acid polypeptide reads, in one-letter code: MGVKSVRFSIWFLFVVTDLVFCRTLSGDPDPCDATNQREFQKLRSDQITVLINGYSEYRIPLLQTIVASYSSSSIVSSILVLWGNPSTPDQLLDQLYQNLTQYSPGSASISLIQQSSSSLNARFLPRSSVDTRAVLICDDDVEIDQRSLEFAFSVWKSNPDRLVGTFVRSHGFDLQGKEWIYTVHPDKYSIVLTKFMMMKQDYLFEYSCKGGVEMEEMRMIVDQMRNCEDILMNFVAADRLRAGPIMVGAERVRDWGDARNEEVEERVRDVGLSSRRVEHRKRRGNCIREFHRVMGKMPLMYSYGKVVNSVGEQGLCRKAGKLVFCDRD.

A signal peptide spans 1–27; that stretch reads MGVKSVRFSIWFLFVVTDLVFCRTLSG. N-linked (GlcNAc...) asparagine glycosylation is present at N99. Substrate is bound by residues 118–123, 139–141, R169, 226–230, and 271–284; these read SSLNAR, DDD, RNCED, and VGLS…RKRR. D141 lines the Mn(2+) pocket. A disulfide bond links C228 and C287. D230 is an active-site residue. Residues 268-284 are substrate binding; sequence VRDVGLSSRRVEHRKRR.

It belongs to the glycosyltransferase 64 family. Mn(2+) serves as cofactor.

The protein operates within protein modification; protein glycosylation. Probable glycosyltransferase. The protein is Glycosyltransferase family protein 64 C3 of Arabidopsis thaliana (Mouse-ear cress).